A 338-amino-acid chain; its full sequence is NADH-quinone oxidoreductase subunit H (338 aa).

8 helical membrane passes run 22-42, 96-116, 121-141, 161-181, 193-213, 249-269, 277-297, and 315-335; these read VVQAVVILLVVVLVAALMSFI, VAMATAVLSFMVIPVSPALGV, IGLLFFMAMAGIAVYAVLFGG, ISYEVFLGISLMGVVAIAGSF, VWFIIPQFLGFLIFVVAGVAV, YVNVVLISALIVTLFFGGWLA, FVPPVFWFVIKTAFFVMMFVL, and WKICLPLALVNLLVTGAVILM.

Belongs to the complex I subunit 1 family. In terms of assembly, NDH-1 is composed of 14 different subunits. Subunits NuoA, H, J, K, L, M, N constitute the membrane sector of the complex.

It is found in the cell inner membrane. The catalysed reaction is a quinone + NADH + 5 H(+)(in) = a quinol + NAD(+) + 4 H(+)(out). In terms of biological role, NDH-1 shuttles electrons from NADH, via FMN and iron-sulfur (Fe-S) centers, to quinones in the respiratory chain. The immediate electron acceptor for the enzyme in this species is believed to be ubiquinone. Couples the redox reaction to proton translocation (for every two electrons transferred, four hydrogen ions are translocated across the cytoplasmic membrane), and thus conserves the redox energy in a proton gradient. This subunit may bind ubiquinone. The chain is NADH-quinone oxidoreductase subunit H from Acinetobacter baumannii (strain ATCC 17978 / DSM 105126 / CIP 53.77 / LMG 1025 / NCDC KC755 / 5377).